The chain runs to 537 residues: Glutamyl-tRNA(Gln) amidotransferase subunit B, chloroplastic/mitochondrial (537 aa).

This sequence belongs to the GatB/GatE family. GatB subfamily. Subunit of the heterotrimeric GatCAB amidotransferase (AdT) complex, composed of A, B and C subunits.

It localises to the mitochondrion. The protein localises to the plastid. The protein resides in the chloroplast. It carries out the reaction L-glutamyl-tRNA(Gln) + L-glutamine + ATP + H2O = L-glutaminyl-tRNA(Gln) + L-glutamate + ADP + phosphate + H(+). Functionally, allows the formation of correctly charged Gln-tRNA(Gln) through the transamidation of misacylated Glu-tRNA(Gln) in chloroplasts and mitochondria. The reaction takes place in the presence of glutamine and ATP through an activated gamma-phospho-Glu-tRNA(Gln). This chain is Glutamyl-tRNA(Gln) amidotransferase subunit B, chloroplastic/mitochondrial, found in Ostreococcus tauri.